The chain runs to 235 residues: Small ribosomal subunit protein eS4 (235 aa).

Residues 43-114 (IPLLLIVRDM…DPHRFLRLIE (72 aa)) enclose the S4 RNA-binding domain.

This sequence belongs to the eukaryotic ribosomal protein eS4 family.

This chain is Small ribosomal subunit protein eS4, found in Korarchaeum cryptofilum (strain OPF8).